A 107-amino-acid chain; its full sequence is Phosphoribosyl-ATP pyrophosphatase (107 aa).

Belongs to the PRA-PH family.

It localises to the cytoplasm. The catalysed reaction is 1-(5-phospho-beta-D-ribosyl)-ATP + H2O = 1-(5-phospho-beta-D-ribosyl)-5'-AMP + diphosphate + H(+). It functions in the pathway amino-acid biosynthesis; L-histidine biosynthesis; L-histidine from 5-phospho-alpha-D-ribose 1-diphosphate: step 2/9. In Brucella abortus (strain S19), this protein is Phosphoribosyl-ATP pyrophosphatase.